The following is a 532-amino-acid chain: uncharacterized protein (532 aa).

13 helical membrane-spanning segments follow: residues 13 to 33 (MSLL…QTLL), 53 to 73 (WLTT…AFLI), 80 to 100 (SLFL…GIAP), 111 to 131 (IQAV…LLIF), 142 to 162 (IFGL…GWII), 169 to 189 (IMFY…FFIF), 203 to 223 (LGAI…SEAG), 231 to 251 (IVLS…VQQL), 273 to 293 (VINI…PIYL), 306 to 326 (LLLL…GILF), 334 to 354 (LAII…QLTI), 361 to 381 (IMLI…PVMT), and 483 to 503 (INDA…LSIF).

The protein belongs to the major facilitator superfamily. EmrB family.

The protein resides in the cell membrane. This is an uncharacterized protein from Bacillus subtilis (strain 168).